A 266-amino-acid polypeptide reads, in one-letter code: Phosphate import ATP-binding protein PstB 1 (266 aa).

The region spanning A18–V261 is the ABC transporter domain. G50 to T57 contributes to the ATP binding site.

This sequence belongs to the ABC transporter superfamily. Phosphate importer (TC 3.A.1.7) family. As to quaternary structure, the complex is composed of two ATP-binding proteins (PstB), two transmembrane proteins (PstC and PstA) and a solute-binding protein (PstS).

It is found in the cell inner membrane. The enzyme catalyses phosphate(out) + ATP + H2O = ADP + 2 phosphate(in) + H(+). Part of the ABC transporter complex PstSACB involved in phosphate import. Responsible for energy coupling to the transport system. This chain is Phosphate import ATP-binding protein PstB 1, found in Gloeobacter violaceus (strain ATCC 29082 / PCC 7421).